A 338-amino-acid chain; its full sequence is Heat-inducible transcription repressor HrcA (338 aa).

It belongs to the HrcA family.

In terms of biological role, negative regulator of class I heat shock genes (grpE-dnaK-dnaJ and groELS operons). Prevents heat-shock induction of these operons. The sequence is that of Heat-inducible transcription repressor HrcA from Thermotoga maritima (strain ATCC 43589 / DSM 3109 / JCM 10099 / NBRC 100826 / MSB8).